Here is a 145-residue protein sequence, read N- to C-terminus: Large ribosomal subunit protein uL15 (145 aa).

The segment at 23–51 is disordered; sequence IGSGWGKTGGRGHKGQKSRSGGKIRKSFE. Residues 32–47 are compositionally biased toward basic residues; that stretch reads GRGHKGQKSRSGGKIR.

This sequence belongs to the universal ribosomal protein uL15 family. As to quaternary structure, part of the 50S ribosomal subunit.

Functionally, binds to the 23S rRNA. In Buchnera aphidicola subsp. Cinara cedri (strain Cc), this protein is Large ribosomal subunit protein uL15.